A 516-amino-acid chain; its full sequence is Cysteine--tRNA ligase (516 aa).

Position 32 (cysteine 32) interacts with Zn(2+). A 'HIGH' region motif is present at residues 34-44; that stretch reads PTVYMYAHIGN. 3 residues coordinate Zn(2+): cysteine 230, histidine 255, and glutamate 259. Positions 287-291 match the 'KMSKS' region motif; the sequence is KMSKS. ATP is bound at residue lysine 290.

It belongs to the class-I aminoacyl-tRNA synthetase family. Monomer. Requires Zn(2+) as cofactor.

Its subcellular location is the cytoplasm. It carries out the reaction tRNA(Cys) + L-cysteine + ATP = L-cysteinyl-tRNA(Cys) + AMP + diphosphate. The protein is Cysteine--tRNA ligase of Salinibacter ruber (strain DSM 13855 / M31).